The primary structure comprises 489 residues: Glycogen synthase (489 aa).

K15 contributes to the ADP-alpha-D-glucose binding site.

The protein belongs to the glycosyltransferase 1 family. Bacterial/plant glycogen synthase subfamily.

It carries out the reaction [(1-&gt;4)-alpha-D-glucosyl](n) + ADP-alpha-D-glucose = [(1-&gt;4)-alpha-D-glucosyl](n+1) + ADP + H(+). It functions in the pathway glycan biosynthesis; glycogen biosynthesis. Its function is as follows. Synthesizes alpha-1,4-glucan chains using ADP-glucose. In Francisella tularensis subsp. mediasiatica (strain FSC147), this protein is Glycogen synthase.